The sequence spans 62 residues: uncharacterized protein (62 aa).

The segment at 1–26 (MGELAASANHGHSPCYPERKGTPGDL) is disordered. Positions 17 to 26 (PERKGTPGDL) are enriched in basic and acidic residues.

This is an uncharacterized protein from Homo sapiens (Human).